The following is a 617-amino-acid chain: Dihydroxy-acid dehydratase (617 aa).

Residue Asp81 participates in Mg(2+) binding. Cys122 serves as a coordination point for [2Fe-2S] cluster. The Mg(2+) site is built by Asp123 and Lys124. N6-carboxylysine is present on Lys124. Cys195 serves as a coordination point for [2Fe-2S] cluster. Residue Glu491 participates in Mg(2+) binding. Ser517 serves as the catalytic Proton acceptor.

It belongs to the IlvD/Edd family. Homodimer. [2Fe-2S] cluster is required as a cofactor. Mg(2+) serves as cofactor.

The catalysed reaction is (2R)-2,3-dihydroxy-3-methylbutanoate = 3-methyl-2-oxobutanoate + H2O. The enzyme catalyses (2R,3R)-2,3-dihydroxy-3-methylpentanoate = (S)-3-methyl-2-oxopentanoate + H2O. The protein operates within amino-acid biosynthesis; L-isoleucine biosynthesis; L-isoleucine from 2-oxobutanoate: step 3/4. It functions in the pathway amino-acid biosynthesis; L-valine biosynthesis; L-valine from pyruvate: step 3/4. In terms of biological role, functions in the biosynthesis of branched-chain amino acids. Catalyzes the dehydration of (2R,3R)-2,3-dihydroxy-3-methylpentanoate (2,3-dihydroxy-3-methylvalerate) into 2-oxo-3-methylpentanoate (2-oxo-3-methylvalerate) and of (2R)-2,3-dihydroxy-3-methylbutanoate (2,3-dihydroxyisovalerate) into 2-oxo-3-methylbutanoate (2-oxoisovalerate), the penultimate precursor to L-isoleucine and L-valine, respectively. In Caulobacter vibrioides (strain ATCC 19089 / CIP 103742 / CB 15) (Caulobacter crescentus), this protein is Dihydroxy-acid dehydratase.